Consider the following 326-residue polypeptide: 4-hydroxy-3-methylbut-2-enyl diphosphate reductase 1 (326 aa).

Cys-27 serves as a coordination point for [4Fe-4S] cluster. (2E)-4-hydroxy-3-methylbut-2-enyl diphosphate-binding residues include His-56 and His-89. Residues His-56 and His-89 each contribute to the dimethylallyl diphosphate site. The isopentenyl diphosphate site is built by His-56 and His-89. Cys-111 is a binding site for [4Fe-4S] cluster. His-139 is a binding site for (2E)-4-hydroxy-3-methylbut-2-enyl diphosphate. His-139 is a binding site for dimethylallyl diphosphate. Position 139 (His-139) interacts with isopentenyl diphosphate. Residue Glu-141 is the Proton donor of the active site. A (2E)-4-hydroxy-3-methylbut-2-enyl diphosphate-binding site is contributed by Thr-179. Cys-209 contributes to the [4Fe-4S] cluster binding site. Ser-237, Ser-238, Asn-239, and Ser-281 together coordinate (2E)-4-hydroxy-3-methylbut-2-enyl diphosphate. 4 residues coordinate dimethylallyl diphosphate: Ser-237, Ser-238, Asn-239, and Ser-281. Ser-237, Ser-238, Asn-239, and Ser-281 together coordinate isopentenyl diphosphate.

It belongs to the IspH family. It depends on [4Fe-4S] cluster as a cofactor.

The catalysed reaction is isopentenyl diphosphate + 2 oxidized [2Fe-2S]-[ferredoxin] + H2O = (2E)-4-hydroxy-3-methylbut-2-enyl diphosphate + 2 reduced [2Fe-2S]-[ferredoxin] + 2 H(+). The enzyme catalyses dimethylallyl diphosphate + 2 oxidized [2Fe-2S]-[ferredoxin] + H2O = (2E)-4-hydroxy-3-methylbut-2-enyl diphosphate + 2 reduced [2Fe-2S]-[ferredoxin] + 2 H(+). It participates in isoprenoid biosynthesis; dimethylallyl diphosphate biosynthesis; dimethylallyl diphosphate from (2E)-4-hydroxy-3-methylbutenyl diphosphate: step 1/1. Its pathway is isoprenoid biosynthesis; isopentenyl diphosphate biosynthesis via DXP pathway; isopentenyl diphosphate from 1-deoxy-D-xylulose 5-phosphate: step 6/6. Catalyzes the conversion of 1-hydroxy-2-methyl-2-(E)-butenyl 4-diphosphate (HMBPP) into a mixture of isopentenyl diphosphate (IPP) and dimethylallyl diphosphate (DMAPP). Acts in the terminal step of the DOXP/MEP pathway for isoprenoid precursor biosynthesis. The chain is 4-hydroxy-3-methylbut-2-enyl diphosphate reductase 1 from Burkholderia pseudomallei (strain K96243).